We begin with the raw amino-acid sequence, 264 residues long: MLQFPQFDPVALRLGPLAIHWYGLMYLLAFAFVYLLGRYRIKRGQGGNLTYKDLEDLIFYSVLGVVLGGRLGYVLFYKPGYYLSHPLEIAFLWEGGMSFHGGLIGVILVMLLFARKKGVSFFTISDFIAPLIPLGLGAGRLGNFINGELWGRPSDLPWAMVFPQSGSMLPRHPSQLYELGLEGLVLFALLWWFSSKPRPSGQVSAMFLMGYGAFRFLVEFTREPDNFLGLLAGGMSMGQWLSLPMFLGGLVLFVLTARRSSRQP.

4 helical membrane passes run 17 to 37, 57 to 77, 89 to 109, and 118 to 138; these read LAIH…YLLG, LIFY…VLFY, IAFL…VILV, and GVSF…GLGA. R140 is an a 1,2-diacyl-sn-glycero-3-phospho-(1'-sn-glycerol) binding site. The next 3 helical transmembrane spans lie at 173–193, 201–221, and 237–257; these read PSQL…LWWF, GQVS…VEFT, and MGQW…VLTA.

The protein belongs to the Lgt family.

The protein resides in the cell inner membrane. It catalyses the reaction L-cysteinyl-[prolipoprotein] + a 1,2-diacyl-sn-glycero-3-phospho-(1'-sn-glycerol) = an S-1,2-diacyl-sn-glyceryl-L-cysteinyl-[prolipoprotein] + sn-glycerol 1-phosphate + H(+). The protein operates within protein modification; lipoprotein biosynthesis (diacylglyceryl transfer). Functionally, catalyzes the transfer of the diacylglyceryl group from phosphatidylglycerol to the sulfhydryl group of the N-terminal cysteine of a prolipoprotein, the first step in the formation of mature lipoproteins. The chain is Phosphatidylglycerol--prolipoprotein diacylglyceryl transferase from Bordetella avium (strain 197N).